Consider the following 392-residue polypeptide: S-adenosylmethionine synthase (392 aa).

Histidine 22 lines the ATP pocket. Aspartate 24 is a binding site for Mg(2+). Glutamate 50 is a K(+) binding site. Glutamate 63 and glutamine 106 together coordinate L-methionine. The flexible loop stretch occupies residues 106-116 (QSPDITQGVTL). ATP contacts are provided by residues 170–172 (DGK), 236–237 (KF), aspartate 245, 251–252 (RK), alanine 268, and lysine 272. Aspartate 245 serves as a coordination point for L-methionine. Lysine 276 is a binding site for L-methionine.

Belongs to the AdoMet synthase family. As to quaternary structure, homotetramer; dimer of dimers. It depends on Mg(2+) as a cofactor. Requires K(+) as cofactor.

It is found in the cytoplasm. It catalyses the reaction L-methionine + ATP + H2O = S-adenosyl-L-methionine + phosphate + diphosphate. It functions in the pathway amino-acid biosynthesis; S-adenosyl-L-methionine biosynthesis; S-adenosyl-L-methionine from L-methionine: step 1/1. Its function is as follows. Catalyzes the formation of S-adenosylmethionine (AdoMet) from methionine and ATP. The overall synthetic reaction is composed of two sequential steps, AdoMet formation and the subsequent tripolyphosphate hydrolysis which occurs prior to release of AdoMet from the enzyme. This is S-adenosylmethionine synthase from Sulfurimonas denitrificans (strain ATCC 33889 / DSM 1251) (Thiomicrospira denitrificans (strain ATCC 33889 / DSM 1251)).